Here is a 262-residue protein sequence, read N- to C-terminus: Ribosomal RNA small subunit methyltransferase A (262 aa).

S-adenosyl-L-methionine-binding residues include His-16, Leu-18, Gly-43, Glu-64, Asp-89, and Asn-109.

Belongs to the class I-like SAM-binding methyltransferase superfamily. rRNA adenine N(6)-methyltransferase family. RsmA subfamily.

The protein localises to the cytoplasm. It catalyses the reaction adenosine(1518)/adenosine(1519) in 16S rRNA + 4 S-adenosyl-L-methionine = N(6)-dimethyladenosine(1518)/N(6)-dimethyladenosine(1519) in 16S rRNA + 4 S-adenosyl-L-homocysteine + 4 H(+). In terms of biological role, specifically dimethylates two adjacent adenosines (A1518 and A1519) in the loop of a conserved hairpin near the 3'-end of 16S rRNA in the 30S particle. May play a critical role in biogenesis of 30S subunits. The protein is Ribosomal RNA small subunit methyltransferase A of Xanthomonas oryzae pv. oryzae (strain MAFF 311018).